A 364-amino-acid chain; its full sequence is Chorismate synthase (364 aa).

An NADP(+)-binding site is contributed by arginine 48. Residues 126 to 128 (RSS), glycine 288, 303 to 307 (KPIAS), and arginine 329 contribute to the FMN site.

The protein belongs to the chorismate synthase family. Homotetramer. Requires FMNH2 as cofactor.

The catalysed reaction is 5-O-(1-carboxyvinyl)-3-phosphoshikimate = chorismate + phosphate. It participates in metabolic intermediate biosynthesis; chorismate biosynthesis; chorismate from D-erythrose 4-phosphate and phosphoenolpyruvate: step 7/7. Functionally, catalyzes the anti-1,4-elimination of the C-3 phosphate and the C-6 proR hydrogen from 5-enolpyruvylshikimate-3-phosphate (EPSP) to yield chorismate, which is the branch point compound that serves as the starting substrate for the three terminal pathways of aromatic amino acid biosynthesis. This reaction introduces a second double bond into the aromatic ring system. This is Chorismate synthase from Desulfovibrio desulfuricans (strain ATCC 27774 / DSM 6949 / MB).